The following is a 398-amino-acid chain: Ornithine aminotransferase (398 aa).

Lysine 256 is modified (N6-(pyridoxal phosphate)lysine).

It belongs to the class-III pyridoxal-phosphate-dependent aminotransferase family. OAT subfamily. Pyridoxal 5'-phosphate serves as cofactor.

It localises to the cytoplasm. The catalysed reaction is a 2-oxocarboxylate + L-ornithine = L-glutamate 5-semialdehyde + an L-alpha-amino acid. It functions in the pathway amino-acid biosynthesis; L-proline biosynthesis; L-glutamate 5-semialdehyde from L-ornithine: step 1/1. Catalyzes the interconversion of ornithine to glutamate semialdehyde. In Oceanobacillus iheyensis (strain DSM 14371 / CIP 107618 / JCM 11309 / KCTC 3954 / HTE831), this protein is Ornithine aminotransferase.